Reading from the N-terminus, the 478-residue chain is Lysine histidine transporter-like 7 (478 aa).

At 1 to 63 (MSIALGNLFD…ITESRKGNVY (63 aa)) the chain is on the cytoplasmic side. The interval 15–45 (ESGGSPLFMSPAPSTDPQPISGEKNGGDGGR) is disordered. Residues 64 to 86 (TATFHLLCSGIGLQVILLPAAFA) form a helical membrane-spanning segment. At 87 to 89 (ALG) the chain is on the extracellular side. Residues 90–112 (WVWGTIILTVGFVWKLYTTWLLV) form a helical membrane-spanning segment. Over 113–140 (QLHEAVPGIRISRYVRLAIASFGVKLGK) the chain is Cytoplasmic. The chain crosses the membrane as a helical span at residues 141–161 (LLGIFPVMYLSGGACTILVIT). Residues 162–177 (GGKSIQQLLQIMSDDN) are Extracellular-facing. A helical membrane pass occupies residues 178 to 198 (TAPLTSVQCFLVFSCIAMIMS). The Cytoplasmic segment spans residues 199-205 (QFPNLNS). The helical transmembrane segment at 206 to 226 (LFGVSLIGAFMGIAYCTVIWI) threads the bilayer. Over 227 to 241 (LPVASDSQRTQVSVS) the chain is Extracellular. A helical transmembrane segment spans residues 242–262 (YATMDKSFVHIFNAIGLIALV). Residues 263 to 291 (YRGNNLVLEIQGTLPSDSKNPSCKTMWRA) lie on the Cytoplasmic side of the membrane. The chain crosses the membrane as a helical span at residues 292–312 (VMISHALVAICMFPLTFAVYW). The Extracellular portion of the chain corresponds to 313 to 340 (AYGDKIPATGGPVGNYLKLYTQEHSKRA). The helical transmembrane segment at 341 to 361 (ACFIHLTFIFSCLCSYPINLM) threads the bilayer. At 362–379 (PACDNIEMVYITKKKKPA) the chain is on the cytoplasmic side. The helical transmembrane segment at 380-402 (SIIVRMMLRVFLSLVCFTIAVGF) threads the bilayer. Over 403 to 406 (PFLP) the chain is Extracellular. The helical transmembrane segment at 407–429 (YLAVLIGAIALLVTFTYPCFMWI) threads the bilayer. The Cytoplasmic portion of the chain corresponds to 430–439 (SIKKPQRKSP). The helical transmembrane segment at 440 to 460 (MWLFNVLVGCLGASLSVLLLV) threads the bilayer. The Extracellular portion of the chain corresponds to 461–478 (ASAMRLAQKGLHANFFRP).

The protein belongs to the amino acid/polyamine transporter 2 family. Amino acid/auxin permease (AAAP) (TC 2.A.18.2) subfamily.

The protein resides in the cell membrane. Amino acid transporter. The sequence is that of Lysine histidine transporter-like 7 from Arabidopsis thaliana (Mouse-ear cress).